The chain runs to 311 residues: Homoserine kinase (311 aa).

P89–T99 is a binding site for ATP.

The protein belongs to the GHMP kinase family. Homoserine kinase subfamily.

The protein localises to the cytoplasm. It carries out the reaction L-homoserine + ATP = O-phospho-L-homoserine + ADP + H(+). It participates in amino-acid biosynthesis; L-threonine biosynthesis; L-threonine from L-aspartate: step 4/5. Functionally, catalyzes the ATP-dependent phosphorylation of L-homoserine to L-homoserine phosphate. The chain is Homoserine kinase from Halothermothrix orenii (strain H 168 / OCM 544 / DSM 9562).